The sequence spans 606 residues: Proline--tRNA ligase (606 aa).

It belongs to the class-II aminoacyl-tRNA synthetase family. ProS type 1 subfamily. In terms of assembly, homodimer.

It is found in the cytoplasm. The catalysed reaction is tRNA(Pro) + L-proline + ATP = L-prolyl-tRNA(Pro) + AMP + diphosphate. Its function is as follows. Catalyzes the attachment of proline to tRNA(Pro) in a two-step reaction: proline is first activated by ATP to form Pro-AMP and then transferred to the acceptor end of tRNA(Pro). As ProRS can inadvertently accommodate and process non-cognate amino acids such as alanine and cysteine, to avoid such errors it has two additional distinct editing activities against alanine. One activity is designated as 'pretransfer' editing and involves the tRNA(Pro)-independent hydrolysis of activated Ala-AMP. The other activity is designated 'posttransfer' editing and involves deacylation of mischarged Ala-tRNA(Pro). The misacylated Cys-tRNA(Pro) is not edited by ProRS. The protein is Proline--tRNA ligase of Kocuria rhizophila (strain ATCC 9341 / DSM 348 / NBRC 103217 / DC2201).